Consider the following 243-residue polypeptide: Voltage-gated monoatomic cation channel TMEM109 (243 aa).

The first 33 residues, 1–33, serve as a signal peptide directing secretion; sequence MAASSISSPWGKHVFKAILMVLVALILLHSALA. The Lumenal segment spans residues 34–83; the sequence is QSRRDFAPPGQQKREAPVDVLTQIGRSVRGTLDAWIGPETMHLVSESSSQ. The chain crosses the membrane as a helical span at residues 84-104; the sequence is VLWAISSAISVAFFALSGIAA. Topologically, residues 105-135 are cytoplasmic; sequence QLLNALGLAGDYLAQGLKLSPGQVQTFLLWG. Residues 136 to 156 traverse the membrane as a helical segment; it reads AGALVVYWLLSLLLGLVLALL. At 157–185 the chain is on the lumenal side; it reads GRILWGLKLVIFLAGFVALMRSVPDPSTR. The chain crosses the membrane as a helical span at residues 186–205; the sequence is ALLLLALLILYALLSRLTGS. Residues 206 to 243 are Cytoplasmic-facing; it reads RASGAQLEAKVRGLERQVEELRWRQRRAAKGARSVEEE.

In terms of assembly, homooligomer. Interacts with CRYAB; in the cellular response to DNA damage.

Its subcellular location is the nucleus outer membrane. The protein localises to the endoplasmic reticulum membrane. It is found in the sarcoplasmic reticulum membrane. It carries out the reaction K(+)(in) = K(+)(out). The enzyme catalyses Ca(2+)(in) = Ca(2+)(out). Its function is as follows. Functions as a voltage-gated monoatomic cation channel permeable to both potassium and calcium. Plays a role in the cellular response to DNA damage. This is Voltage-gated monoatomic cation channel TMEM109 from Homo sapiens (Human).